Here is a 333-residue protein sequence, read N- to C-terminus: Ephrin-B2 (333 aa).

The first 27 residues, 1–27 (MAVRRDSVWKYCWGVLMVLCRTAISKS), serve as a signal peptide directing secretion. The Ephrin RBD domain maps to 28 to 164 (IVLEPIYWNS…TRAMKILMKV (137 aa)). The Extracellular portion of the chain corresponds to 28–229 (IVLEPIYWNS…ILGSEVALFA (202 aa)). N-linked (GlcNAc...) asparagine glycosylation occurs at Asn-36. 2 disulfides stabilise this stretch: Cys-62-Cys-101 and Cys-89-Cys-153. N-linked (GlcNAc...) asparagine glycosylation occurs at Asn-139. Residues 165–213 (GQDASSAGSTRNKDPTRRPELEAGTNGRSSTTSPFVKPNPGSSTDGNSA) are disordered. The span at 175–185 (RNKDPTRRPEL) shows a compositional bias: basic and acidic residues. Over residues 190–213 (NGRSSTTSPFVKPNPGSSTDGNSA) the composition is skewed to polar residues. Residues 230-250 (GIASGCIIFIVIIITLVVLLL) form a helical membrane-spanning segment. The Cytoplasmic portion of the chain corresponds to 251–333 (KYRRRHRKHS…QSPANIYYKV (83 aa)). At Ser-260 the chain carries Phosphoserine. At Thr-274 the chain carries Phosphothreonine. An Omega-N-methylarginine modification is found at Arg-277. Residues 331–333 (YKV) carry the PDZ-binding motif.

This sequence belongs to the ephrin family. As to quaternary structure, interacts with PDZRN3. Binds to the receptor tyrosine kinases EPHA4, EPHB4 and EPHA3. In terms of assembly, (Microbial infection) Interacts with Hendra virus and Nipah virus G protein. Post-translationally, inducible phosphorylation of tyrosine residues in the cytoplasmic domain. As to expression, lung and kidney.

It localises to the cell membrane. The protein localises to the cell junction. Its subcellular location is the adherens junction. In terms of biological role, cell surface transmembrane ligand for Eph receptors, a family of receptor tyrosine kinases which are crucial for migration, repulsion and adhesion during neuronal, vascular and epithelial development. Binds promiscuously Eph receptors residing on adjacent cells, leading to contact-dependent bidirectional signaling into neighboring cells. The signaling pathway downstream of the receptor is referred to as forward signaling while the signaling pathway downstream of the ephrin ligand is referred to as reverse signaling. Binds to receptor tyrosine kinase including EPHA4, EPHA3 and EPHB4. Together with EPHB4 plays a central role in heart morphogenesis and angiogenesis through regulation of cell adhesion and cell migration. EPHB4-mediated forward signaling controls cellular repulsion and segregation from EFNB2-expressing cells. May play a role in constraining the orientation of longitudinally projecting axons. Its function is as follows. (Microbial infection) Acts as a receptor for Hendra virus and Nipah virus. This is Ephrin-B2 (EFNB2) from Homo sapiens (Human).